Reading from the N-terminus, the 407-residue chain is Methylthioribose kinase (407 aa).

ATP contacts are provided by residues asparagine 40, lysine 57, and 111–113 (EDL). Aspartate 229 is a binding site for substrate. 246–248 (DAE) contacts ATP. Residue arginine 344 participates in substrate binding.

This sequence belongs to the methylthioribose kinase family. In terms of assembly, homodimer.

The enzyme catalyses 5-(methylsulfanyl)-D-ribose + ATP = 5-(methylsulfanyl)-alpha-D-ribose 1-phosphate + ADP + H(+). The protein operates within amino-acid biosynthesis; L-methionine biosynthesis via salvage pathway; S-methyl-5-thio-alpha-D-ribose 1-phosphate from S-methyl-5'-thioadenosine (hydrolase route): step 2/2. In terms of biological role, catalyzes the phosphorylation of methylthioribose into methylthioribose-1-phosphate. This is Methylthioribose kinase from Yersinia pseudotuberculosis serotype O:1b (strain IP 31758).